Reading from the N-terminus, the 196-residue chain is Probable malonic semialdehyde reductase RutE (196 aa).

It belongs to the nitroreductase family. HadB/RutE subfamily. Requires FMN as cofactor.

It catalyses the reaction 3-hydroxypropanoate + NADP(+) = 3-oxopropanoate + NADPH + H(+). Its function is as follows. May reduce toxic product malonic semialdehyde to 3-hydroxypropionic acid, which is excreted. This is Probable malonic semialdehyde reductase RutE from Escherichia coli O45:K1 (strain S88 / ExPEC).